The following is a 306-amino-acid chain: N-acetylmuramic acid 6-phosphate etherase (306 aa).

Residues Ala55–Lys218 form the SIS domain. Glu83 functions as the Proton donor in the catalytic mechanism. Glu114 is a catalytic residue.

This sequence belongs to the GCKR-like family. MurNAc-6-P etherase subfamily. In terms of assembly, homodimer.

The catalysed reaction is N-acetyl-D-muramate 6-phosphate + H2O = N-acetyl-D-glucosamine 6-phosphate + (R)-lactate. It participates in amino-sugar metabolism; 1,6-anhydro-N-acetylmuramate degradation. The protein operates within amino-sugar metabolism; N-acetylmuramate degradation. It functions in the pathway cell wall biogenesis; peptidoglycan recycling. Its function is as follows. Specifically catalyzes the cleavage of the D-lactyl ether substituent of MurNAc 6-phosphate, producing GlcNAc 6-phosphate and D-lactate. Together with AnmK, is also required for the utilization of anhydro-N-acetylmuramic acid (anhMurNAc) either imported from the medium or derived from its own cell wall murein, and thus plays a role in cell wall recycling. This Erwinia tasmaniensis (strain DSM 17950 / CFBP 7177 / CIP 109463 / NCPPB 4357 / Et1/99) protein is N-acetylmuramic acid 6-phosphate etherase.